The primary structure comprises 368 residues: 2-oxoglutarate-dependent dioxygenase frbJ (368 aa).

The region spanning 171-277 (QQHKLKIVKY…RYSIPFFQGV (107 aa)) is the Fe2OG dioxygenase domain. Residues His198, Asp200, and His256 each contribute to the Fe cation site. Arg268 provides a ligand contact to 2-oxoglutarate.

The protein belongs to the iron/ascorbate-dependent oxidoreductase family.

It participates in antifungal biosynthesis. 2-oxoglutarate-dependent dioxygenase; part of the gene cluster that mediates the biosynthesis of the antifungal antibiotic FR901469, an inhibitor of beta-1,3-glucansynthase, exerting antifungal activity against the pathogenes Candida albicans and Aspergillus fumigatus. FR901469 is a cyclic depsipeptide containing 12 amino acid residues and a fatty acid chain. The NRPS frbI contains 12 modules responsible for the formation of the depsipeptide backbone which is denoted as Acyl-Thr-Ala-Tyr-Val-4OHPro-Thr-Thr-3OHPro-threo3OHGln-Gly-Thr-Orn-OH (C71H116N14O23). The PKS frbB is probably involved in the production of the hydrocarbon chain, and the acyl-CoA ligase frbC might be involved in the transport of the chain to the peptide ptoduct of frbI. Because FR901469 contains 3 hydroxylated amino acid residues, the 3 oxygenases frbA, frbH, and frbJ might be participating in amino acid hydroxylation. As no thioesterase domains were detected in frbI or frbB, the thioesterases frbD and frbE may instead release and cyclize the products of the NRPS and PKS, respectively. This is 2-oxoglutarate-dependent dioxygenase frbJ from Dothideomycetidae sp. (strain 11243) (Fungal sp. (strain No.11243)).